Reading from the N-terminus, the 194-residue chain is MRLTDFEIEQALDAGTILIEPRPSNDAISGVSVDVRLGNQFRVFQDHTAPFIDLSGPSAEVQAALDRVMSDKIDIKDGNAFFLHPGELALAVTLESVTLPADIVGWLDGRSSLARLGLMVHVTAHRIDPGWQGKIVLEFYNSGKLPLALRPGMTIGALNFERLSGPVSRPYNKRKNAKYKDQQEAVASRISQDS.

Residues 110 to 115 (RSSLAR), D128, 136 to 138 (VLE), Y171, K178, and Q182 each bind dCTP. E138 functions as the Proton donor/acceptor in the catalytic mechanism. The interval 171 to 194 (YNKRKNAKYKDQQEAVASRISQDS) is disordered.

Belongs to the dCTP deaminase family. Homotrimer.

It carries out the reaction dCTP + H2O + H(+) = dUTP + NH4(+). It functions in the pathway pyrimidine metabolism; dUMP biosynthesis; dUMP from dCTP (dUTP route): step 1/2. Catalyzes the deamination of dCTP to dUTP. The chain is dCTP deaminase from Shewanella amazonensis (strain ATCC BAA-1098 / SB2B).